A 302-amino-acid chain; its full sequence is Oxygen-dependent coproporphyrinogen-III oxidase (302 aa).

Residue Ser94 participates in substrate binding. A divalent metal cation is bound by residues His98 and His108. His108 acts as the Proton donor in catalysis. Residue 110 to 112 (NVR) participates in substrate binding. Residues His147 and His177 each coordinate a divalent metal cation. An important for dimerization region spans residues 242 to 277 (YVEFNLVFDRGTLFGLQSGGRTESILMSMPPVANWR). Position 260 to 262 (260 to 262 (GGR)) interacts with substrate.

The protein belongs to the aerobic coproporphyrinogen-III oxidase family. As to quaternary structure, homodimer. The cofactor is a divalent metal cation.

It localises to the cytoplasm. The catalysed reaction is coproporphyrinogen III + O2 + 2 H(+) = protoporphyrinogen IX + 2 CO2 + 2 H2O. It functions in the pathway porphyrin-containing compound metabolism; protoporphyrin-IX biosynthesis; protoporphyrinogen-IX from coproporphyrinogen-III (O2 route): step 1/1. In terms of biological role, involved in the heme biosynthesis. Catalyzes the aerobic oxidative decarboxylation of propionate groups of rings A and B of coproporphyrinogen-III to yield the vinyl groups in protoporphyrinogen-IX. This is Oxygen-dependent coproporphyrinogen-III oxidase from Ralstonia nicotianae (strain ATCC BAA-1114 / GMI1000) (Ralstonia solanacearum).